A 315-amino-acid polypeptide reads, in one-letter code: Methenyltetrahydromethanopterin cyclohydrolase (315 aa).

Belongs to the MCH family.

It is found in the cytoplasm. The enzyme catalyses 5,10-methenyl-5,6,7,8-tetrahydromethanopterin + H2O = N(5)-formyl-5,6,7,8-tetrahydromethanopterin + H(+). It functions in the pathway one-carbon metabolism; methanogenesis from CO(2); 5,10-methenyl-5,6,7,8-tetrahydromethanopterin from CO(2): step 3/3. In terms of biological role, catalyzes the reversible interconversion of 5-formyl-H(4)MPT to methenyl-H(4)MPT(+). This is Methenyltetrahydromethanopterin cyclohydrolase from Methanoculleus marisnigri (strain ATCC 35101 / DSM 1498 / JR1).